A 318-amino-acid polypeptide reads, in one-letter code: Glycine--tRNA ligase alpha subunit (318 aa).

Belongs to the class-II aminoacyl-tRNA synthetase family. As to quaternary structure, tetramer of two alpha and two beta subunits.

The protein resides in the cytoplasm. The catalysed reaction is tRNA(Gly) + glycine + ATP = glycyl-tRNA(Gly) + AMP + diphosphate. The chain is Glycine--tRNA ligase alpha subunit from Saccharophagus degradans (strain 2-40 / ATCC 43961 / DSM 17024).